Consider the following 359-residue polypeptide: DNA-directed RNA polymerase RPB3-11 homolog (359 aa).

It in the N-terminal section; belongs to the archaeal RpoD/eukaryotic RPB3 RNA polymerase subunit family. This sequence in the C-terminal section; belongs to the archaeal RpoL/eukaryotic RPB11/RPC19 RNA polymerase subunit family. As to quaternary structure, part of the viral DNA-directed RNA polymerase that consists of 8 polII-like subunits (RPB1, RPB2, RPB3, RPB5, RPB6, RPB7, RPB9, RPB10), a capping enzyme and a termination factor.

It is found in the host cytoplasm. It localises to the virion. Component of the DNA-directed RNA polymerase (RNAP) that catalyzes the transcription in the cytoplasm of viral DNA into RNA using the four ribonucleoside triphosphates as substrates. The protein is DNA-directed RNA polymerase RPB3-11 homolog of Ornithodoros (relapsing fever ticks).